Here is a 65-residue protein sequence, read N- to C-terminus: Small ribosomal subunit protein bS21 (65 aa).

This sequence belongs to the bacterial ribosomal protein bS21 family.

In Chlorobaculum parvum (strain DSM 263 / NCIMB 8327) (Chlorobium vibrioforme subsp. thiosulfatophilum), this protein is Small ribosomal subunit protein bS21.